The sequence spans 257 residues: Reticulon-like protein B4 (257 aa).

The disordered stretch occupies residues 19–42; the sequence is IHGHGDSSSLSDSDDDKKSTSSSS. Residues 68-257 form the Reticulon domain; that stretch reads PADIFLWRNK…PRGALNKKKD (190 aa). 3 consecutive transmembrane segments (helical) span residues 78 to 98, 99 to 119, and 173 to 193; these read KVSG…ELFE, YHLL…LFLW, and FILV…YNFL.

In terms of assembly, interacts with VirB2.

Its subcellular location is the endoplasmic reticulum membrane. Its function is as follows. Plays a role in the Agrobacterium-mediated plant transformation via its interaction with VirB2, the major component of the T-pilus. This chain is Reticulon-like protein B4 (RTNLB4), found in Arabidopsis thaliana (Mouse-ear cress).